Here is a 220-residue protein sequence, read N- to C-terminus: Nucleolar protein 12 (220 aa).

Residues 31 to 86 (HKRKMQRRKTAVEEIKRKIKEEQKKMKEERHKEYMKMLKEREEALCELEENDELEE) are a coiled coil. The segment at 109–220 (ISDLDLSGIR…QTGKTRRRRN (112 aa)) is disordered. A compositionally biased stretch (basic and acidic residues) spans 139–148 (EKGADEEKPK). Basic residues-rich tracts occupy residues 176–186 (RSQRKSGKRPS) and 205–220 (KTQRRKQTGKTRRRRN).

This sequence belongs to the RRP17 family.

The protein resides in the nucleus. The protein localises to the nucleolus. In terms of biological role, may bind to rRNA. The polypeptide is Nucleolar protein 12 (nol12) (Xenopus laevis (African clawed frog)).